The sequence spans 342 residues: Cell division protein FtsQ (342 aa).

At 1–80 (MDGAGSLTRS…ALVERYLPRR (80 aa)) the chain is on the cytoplasmic side. A helical membrane pass occupies residues 81-99 (VGISMTVLLLIGSCGFGIV). The Periplasmic segment spans residues 100–342 (KGGHLQDFVT…KKKKKAGDAA (243 aa)). Positions 124–192 (FRITSVVING…GQLMIELTER (69 aa)) constitute a POTRA domain.

The protein belongs to the FtsQ/DivIB family. FtsQ subfamily.

It is found in the cell inner membrane. In terms of biological role, essential cell division protein. The chain is Cell division protein FtsQ from Bradyrhizobium diazoefficiens (strain JCM 10833 / BCRC 13528 / IAM 13628 / NBRC 14792 / USDA 110).